We begin with the raw amino-acid sequence, 229 residues long: MTSKSLNAWVIHKQWSGDTSARLKLFTREMGLINCLCKGGRTPKKQSLLQAFIPLWVSIEERYDQYYTRNIESTSSRLDLEGHSLFSGLYINELLYYTLSPDFPDPDLFDAYLFTLNGIALAREREVIEALLRRFEWALLKACGYTFSFLHEARTGELIVPDSYYQFVAGEGFILGGDKKIPGEHLLAIAADNLSESAYLKSAKFIMRQAIDHLLGGREIKARSLYGPA.

The protein belongs to the RecO family.

In terms of biological role, involved in DNA repair and RecF pathway recombination. In Legionella pneumophila (strain Corby), this protein is DNA repair protein RecO.